A 4644-amino-acid chain; its full sequence is Cytoplasmic dynein 1 heavy chain 1 (4644 aa).

N-acetylserine is present on Ser-2. Residues 2-1865 (SEPGGGEDGS…SIQMANAKFN (1864 aa)) form a stem region. Coiled coils occupy residues 48–69 (AALE…FLSD), 179–200 (SVEK…NIEI), 453–476 (AHRK…QLRA), and 541–564 (TEAW…RITA). Ser-68 is subject to Phosphoserine. An interaction with DYNC1I2 region spans residues 446 to 701 (MVWRINPAHR…NTQEIFDDWA (256 aa)). The interaction with DYNC1LI2 stretch occupies residues 649–800 (AKQIDRQLTA…EKVEERNTIS (152 aa)). Lys-1123 is subject to N6-acetyllysine. The stretch at 1169–1201 (TYVQSLKRKIKQFEKQVELYRNGQRLLEKQRFQ) forms a coiled coil. A Phosphoserine modification is found at Ser-1228. Coiled-coil stretches lie at residues 1229–1250 (AIQQ…AVES) and 1355–1371 (RKLR…LKNF). 4 AAA regions span residues 1866-2097 (YGFE…VLVS), 2178-2450 (EELK…LTRL), 2554-2803 (EVET…WVRG), and 2897-3166 (VFYE…GGRT). ATP contacts are provided by residues 1904 to 1911 (GPAGTGKT) and 2222 to 2229 (GPSGSGKS). Residues 2388-2408 (GEDEAQRRRKGKEDEGEEAAS) are disordered. Residues 2593-2600 (GPPGSGKT) and 2935-2942 (GVSGAGKT) contribute to the ATP site. Coiled coils occupy residues 3187-3273 (EKRS…ADKQ), 3394-3498 (AIAQ…KNQM), and 3735-3798 (EFQL…VSQQ). Residues 3187-3498 (EKRSELEEQQ…KTSETFKNQM (312 aa)) are stalk. Lys-3478 bears the N6-acetyllysine mark. AAA regions lie at residues 3551-3780 (LSNA…EVTR) and 4003-4219 (AHMF…TVDT). Ser-4160 bears the Phosphoserine mark. Lys-4281 bears the N6-acetyllysine mark. Thr-4364 is subject to Phosphothreonine. A Phosphoserine modification is found at Ser-4366.

This sequence belongs to the dynein heavy chain family. As to quaternary structure, homodimer. The cytoplasmic dynein 1 complex consists of two catalytic heavy chains (HCs) and a number of non-catalytic subunits presented by intermediate chains (ICs), light intermediate chains (LICs) and light chains (LCs); the composition seems to vary in respect to the IC, LIC and LC composition. The heavy chain homodimer serves as a scaffold for the probable homodimeric assembly of the respective non-catalytic subunits. The ICs and LICs bind directly to the HC dimer and dynein LCs assemble on the IC dimer. Interacts with DYNC1LI1; DYNC1LI1 and DYNC1LI2 bind mutually exclusive to DYNC1H1. Interacts with DYNC1LI2; DYNC1LI1 and DYNC1LI2 bind mutually exclusive to DYNC1H1. Interacts with DYNC1I2. Interacts with BICD2. Interacts with DNALI1.

Its subcellular location is the cytoplasm. The protein resides in the cytoskeleton. Its function is as follows. Cytoplasmic dynein 1 acts as a motor for the intracellular retrograde motility of vesicles and organelles along microtubules. Dynein has ATPase activity; the force-producing power stroke is thought to occur on release of ADP. Plays a role in mitotic spindle assembly and metaphase plate congression. The protein is Cytoplasmic dynein 1 heavy chain 1 (Dync1h1) of Mus musculus (Mouse).